A 371-amino-acid chain; its full sequence is Glycerol-3-phosphate dehydrogenase [NAD(+)] 2 (371 aa).

NAD(+) is bound by residues 18–23, F50, and F106; that span reads GSGNWG. K129 contributes to the substrate binding site. A162 is a binding site for NAD(+). K222 (proton acceptor) is an active-site residue. Positions 294 and 323 each coordinate NAD(+). Position 294-295 (294-295) interacts with substrate; sequence RN.

The protein belongs to the NAD-dependent glycerol-3-phosphate dehydrogenase family. Interacts with human CFH/complement factor H; the interaction is direct and enables the pathogen to evade the host innate immune system. Interacts with human CFHR1/complement factor H-related protein 1; the interaction is direct. Interacts with human PLG/plasminogen; the interaction is direct and provides active plasmin on the surface of fungal cells.

The protein resides in the secreted. It localises to the cell wall. It is found in the cytoplasm. Its subcellular location is the peroxisome. It catalyses the reaction sn-glycerol 3-phosphate + NAD(+) = dihydroxyacetone phosphate + NADH + H(+). In terms of biological role, may catalyze the production and accumulation of glycerol during hyperosmotic stress conditions. Glycerol acts as a osmoregulator that prevents loss of water and turgor of the cells. Mediates evasion of the host innate immune system by binding inhibitory components of the host alternative complement system, in a manner dependent on estrogen-induced inhibition of EBP1. This Candida albicans (strain SC5314 / ATCC MYA-2876) (Yeast) protein is Glycerol-3-phosphate dehydrogenase [NAD(+)] 2.